A 392-amino-acid polypeptide reads, in one-letter code: Protein Wnt-1 (392 aa).

Positions 1–16 (MKCLWLLVITVLCLRC) are cleaved as a signal peptide. 11 disulfide bridges follow: Cys-89–Cys-100, Cys-142–Cys-150, Cys-152–Cys-179, Cys-227–Cys-241, Cys-229–Cys-236, Cys-321–Cys-352, Cys-337–Cys-347, Cys-351–Cys-391, Cys-367–Cys-382, Cys-369–Cys-379, and Cys-374–Cys-375. The N-linked (GlcNAc...) asparagine glycan is linked to Asn-99. The O-palmitoleoyl serine; by PORCN moiety is linked to residue Ser-233. Residues Asn-338 and Asn-368 are each glycosylated (N-linked (GlcNAc...) asparagine).

The protein belongs to the Wnt family. Palmitoleoylated by porcupine. The lipid group functions as a sorting signal, targeting the ligand to polarized vesicles that transport WNT-1 to unique sites at the cell surface. Depalmitoleoylated by notum, leading to inhibit Wnt signaling pathway.

The protein resides in the secreted. It localises to the extracellular space. It is found in the extracellular matrix. Its function is as follows. Ligand for members of the frizzled family of seven transmembrane receptors. Probable developmental protein. This chain is Protein Wnt-1 (WNT-1), found in Bombyx mori (Silk moth).